We begin with the raw amino-acid sequence, 163 residues long: Shikimate kinase (163 aa).

Gly-10–Thr-15 serves as a coordination point for ATP. Thr-14 contacts Mg(2+). Residues Asp-28, Arg-52, and Gly-75 each coordinate substrate. Arg-116 serves as a coordination point for ATP. Arg-134 serves as a coordination point for substrate. Arg-151 provides a ligand contact to ATP.

This sequence belongs to the shikimate kinase family. Monomer. Requires Mg(2+) as cofactor.

It is found in the cytoplasm. The catalysed reaction is shikimate + ATP = 3-phosphoshikimate + ADP + H(+). It participates in metabolic intermediate biosynthesis; chorismate biosynthesis; chorismate from D-erythrose 4-phosphate and phosphoenolpyruvate: step 5/7. Catalyzes the specific phosphorylation of the 3-hydroxyl group of shikimic acid using ATP as a cosubstrate. The sequence is that of Shikimate kinase from Streptococcus pyogenes serotype M4 (strain MGAS10750).